A 238-amino-acid polypeptide reads, in one-letter code: Purine nucleoside phosphorylase DeoD-type (238 aa).

H4 serves as a coordination point for a purine D-ribonucleoside. Phosphate is bound by residues G20, R24, R43, and 87–90; that span reads RVGS. A purine D-ribonucleoside is bound by residues 179 to 181 and 203 to 204; these read EME and SD. D204 (proton donor) is an active-site residue.

The protein belongs to the PNP/UDP phosphorylase family. Homohexamer; trimer of homodimers.

The enzyme catalyses a purine D-ribonucleoside + phosphate = a purine nucleobase + alpha-D-ribose 1-phosphate. It carries out the reaction a purine 2'-deoxy-D-ribonucleoside + phosphate = a purine nucleobase + 2-deoxy-alpha-D-ribose 1-phosphate. In terms of biological role, catalyzes the reversible phosphorolytic breakdown of the N-glycosidic bond in the beta-(deoxy)ribonucleoside molecules, with the formation of the corresponding free purine bases and pentose-1-phosphate. This Histophilus somni (strain 2336) (Haemophilus somnus) protein is Purine nucleoside phosphorylase DeoD-type.